The chain runs to 201 residues: Recombination protein RecR (201 aa).

The C4-type zinc-finger motif lies at 60-75 (CSVCGNVDTIDPCSIC). In terms of domain architecture, Toprim spans 83-178 (ATIIVVEDIA…KVTRLAHGVP (96 aa)).

This sequence belongs to the RecR family.

In terms of biological role, may play a role in DNA repair. It seems to be involved in an RecBC-independent recombinational process of DNA repair. It may act with RecF and RecO. The chain is Recombination protein RecR from Bartonella henselae (strain ATCC 49882 / DSM 28221 / CCUG 30454 / Houston 1) (Rochalimaea henselae).